The primary structure comprises 1888 residues: E3 ubiquitin-protein ligase UPL3 (1888 aa).

Residues 1-10 (METRSRKRAE) show a composition bias toward basic and acidic residues. The disordered stretch occupies residues 1–157 (METRSRKRAE…NGGFMHPNMS (157 aa)). Positions 41–81 (LSSSSSSSLAPTPPSSSTTTRSRSSRSAAAAAPMDTSTDSS) are enriched in low complexity. A compositionally biased stretch (basic and acidic residues) spans 97-124 (NSDKGKEKEHDVRIRERERERDRAREQL). Over residues 137-146 (DEDDDNDSED) the composition is skewed to acidic residues. ARM repeat units lie at residues 227-267 (EDSL…HLCD), 270-310 (PSSC…KISQ), 312-349 (HPTA…NMCK), and 351-390 (LPSD…RIAE). Disordered stretches follow at residues 660 to 711 (KPSH…IGAN), 970 to 1119 (ALKP…LPMC), 1134 to 1157 (DDDG…GAAA), and 1280 to 1307 (RLSV…VESQ). The segment covering 986 to 1002 (PSGAGVSSPSSSTPAST) has biased composition (low complexity). Positions 1019 to 1029 (TSKKDPVHEKG) are enriched in basic and acidic residues. Acidic residues predominate over residues 1076–1113 (SSEDEELEISPVDIDDALVIEEDDISDDEDDDNEDVLD). Composition is skewed to low complexity over residues 1148 to 1157 (ASGGTSGAAA) and 1286 to 1303 (ASST…TNSS). Positions 1377 to 1451 (AKVPLDEFVN…ALNRLQQQQG (75 aa)) are K-box. One can recognise an HECT domain in the interval 1490 to 1888 (MYSSQKAVLE…NEGQGSFDLS (399 aa)). Residue Cys-1855 is the Glycyl thioester intermediate of the active site.

This sequence belongs to the UPL family. K-HECT subfamily. As to expression, widely expressed.

It catalyses the reaction S-ubiquitinyl-[E2 ubiquitin-conjugating enzyme]-L-cysteine + [acceptor protein]-L-lysine = [E2 ubiquitin-conjugating enzyme]-L-cysteine + N(6)-ubiquitinyl-[acceptor protein]-L-lysine.. It functions in the pathway protein modification; protein ubiquitination. Probable E3 ubiquitin-protein ligase which mediates ubiquitination and subsequent proteasomal degradation of target proteins. Involved in the repression of endoreduplication process and the cell morphogenesis in the trichomes. The polypeptide is E3 ubiquitin-protein ligase UPL3 (UPL3) (Arabidopsis thaliana (Mouse-ear cress)).